A 268-amino-acid chain; its full sequence is Small ribosomal subunit protein uS2 (268 aa).

The interval 228–268 is disordered; that stretch reads QLDSEQDYEDFDESISDEYDDYEDEEEYEEQDLEVDASEDE. Residues 231 to 268 are compositionally biased toward acidic residues; the sequence is SEQDYEDFDESISDEYDDYEDEEEYEEQDLEVDASEDE.

This sequence belongs to the universal ribosomal protein uS2 family.

In Rippkaea orientalis (strain PCC 8801 / RF-1) (Cyanothece sp. (strain PCC 8801)), this protein is Small ribosomal subunit protein uS2.